We begin with the raw amino-acid sequence, 249 residues long: Secreted flagellin C (249 aa).

Post-translationally, the secreted form is about 1 kDa larger than the whole cell lysate form, presumably due to post-translational modification. A 22 kDa form is also found in the secreted fraction, probably resulting from proteolysis.

Its subcellular location is the secreted. The protein localises to the host cell surface. Its function is as follows. Plays a role in virulence. This is Secreted flagellin C (flaC) from Campylobacter jejuni subsp. jejuni serotype O:2 (strain ATCC 700819 / NCTC 11168).